Here is a 231-residue protein sequence, read N- to C-terminus: 5'-methylthioadenosine/S-adenosylhomocysteine nucleosidase (231 aa).

Catalysis depends on E12, which acts as the Proton acceptor. Substrate contacts are provided by residues G78, V153, and 174–175; that span reads ME. Residue D198 is the Proton donor of the active site.

The protein belongs to the PNP/UDP phosphorylase family. MtnN subfamily.

The catalysed reaction is S-adenosyl-L-homocysteine + H2O = S-(5-deoxy-D-ribos-5-yl)-L-homocysteine + adenine. It carries out the reaction S-methyl-5'-thioadenosine + H2O = 5-(methylsulfanyl)-D-ribose + adenine. The enzyme catalyses 5'-deoxyadenosine + H2O = 5-deoxy-D-ribose + adenine. Its pathway is amino-acid biosynthesis; L-methionine biosynthesis via salvage pathway; S-methyl-5-thio-alpha-D-ribose 1-phosphate from S-methyl-5'-thioadenosine (hydrolase route): step 1/2. In terms of biological role, catalyzes the irreversible cleavage of the glycosidic bond in both 5'-methylthioadenosine (MTA) and S-adenosylhomocysteine (SAH/AdoHcy) to adenine and the corresponding thioribose, 5'-methylthioribose and S-ribosylhomocysteine, respectively. Also cleaves 5'-deoxyadenosine, a toxic by-product of radical S-adenosylmethionine (SAM) enzymes, into 5-deoxyribose and adenine. This chain is 5'-methylthioadenosine/S-adenosylhomocysteine nucleosidase, found in Vibrio vulnificus (strain YJ016).